A 292-amino-acid polypeptide reads, in one-letter code: 11-beta-hydroxysteroid dehydrogenase 1 (292 aa).

The Cytoplasmic portion of the chain corresponds to 2 to 7; that stretch reads HFMKKY. A helical; Signal-anchor for type II membrane protein membrane pass occupies residues 8 to 24; that stretch reads LLPILVLFLAYYYYSTK. Residues 25 to 292 are Lumenal-facing; sequence EEFRPEMLQG…SFTFDKLISS (268 aa). NADP(+) is bound by residues 41-67, 92-93, and 119-121; these read GASK…TARS, TM, and NHI. Asn-162 is a glycosylation site (N-linked (GlcNAc...) asparagine). Residue Ser-170 participates in substrate binding. The active-site Proton acceptor is Tyr-183. An NADP(+)-binding site is contributed by 183-187; sequence YSASK. Asn-207 is a glycosylation site (N-linked (GlcNAc...) asparagine). 218–222 is a binding site for NADP(+); that stretch reads INTET.

Belongs to the short-chain dehydrogenases/reductases (SDR) family. In terms of assembly, homodimer. Detected in adrenal gland, liver, kidney, testis, and at lower levels in brain and lung (at protein level).

It is found in the endoplasmic reticulum membrane. It catalyses the reaction an 11beta-hydroxysteroid + NADP(+) = an 11-oxosteroid + NADPH + H(+). The enzyme catalyses corticosterone + NADP(+) = 11-dehydrocorticosterone + NADPH + H(+). It carries out the reaction a 7beta-hydroxysteroid + NADP(+) = a 7-oxosteroid + NADPH + H(+). The catalysed reaction is 7-oxocholesterol + NADPH + H(+) = 7beta-hydroxycholesterol + NADP(+). It catalyses the reaction 7-oxocholesterol + NADPH + H(+) = 7alpha-hydroxycholesterol + NADP(+). The enzyme catalyses chenodeoxycholate + NADP(+) = 7-oxolithocholate + NADPH + H(+). It carries out the reaction 7-oxolithocholate + NADPH + H(+) = ursodeoxycholate + NADP(+). The catalysed reaction is glycochenodeoxycholate + NADP(+) = 7-oxoglycolithocholate + NADPH + H(+). It catalyses the reaction taurochenodeoxycholate + NADP(+) = 7-oxotaurolithocholate + NADPH + H(+). The enzyme catalyses tauroursodeoxycholate + NADP(+) = 7-oxotaurolithocholate + NADPH + H(+). It carries out the reaction glycoursodeoxycholate + NADP(+) = 7-oxoglycolithocholate + NADPH + H(+). The catalysed reaction is 7-oxopregnenolone + NADPH + H(+) = 7beta-hydroxypregnenolone + NADP(+). It catalyses the reaction 3beta,7alpha-dihydroxyandrost-5-en-17-one + NADP(+) = 3beta-hydroxy-5-androstene-7,17-dione + NADPH + H(+). The enzyme catalyses 3beta-hydroxy-5-androstene-7,17-dione + NADPH + H(+) = 3beta,7beta-dihydroxyandrost-5-en-17-one + NADP(+). It carries out the reaction 3beta-hydroxy-5alpha-androstane-7,17-dione + NADPH + H(+) = 3beta,7beta-dihydroxy-5alpha-androstan-17-one + NADP(+). It participates in steroid metabolism. Functionally, controls the reversible conversion of biologically active glucocorticoids such as 11-dehydrocorticosterone to corticosterone in the presence of NADP(H). Participates in the corticosteroid receptor-mediated anti-inflammatory response, as well as metabolic and homeostatic processes. Bidirectional in vitro, predominantly functions as a reductase in vivo, thereby increasing the concentration of active glucocorticoids. It has broad substrate specificity, besides glucocorticoids, it accepts other steroid and sterol substrates. Interconverts 7-oxo- and 7-hydroxy-neurosteroids such as 7-oxopregnenolone and 7beta-hydroxypregnenolone, 7-oxodehydroepiandrosterone (3beta-hydroxy-5-androstene-7,17-dione) and 7beta-hydroxydehydroepiandrosterone (3beta,7beta-dihydroxyandrost-5-en-17-one), among others. Catalyzes reversibly the conversion of the major dietary oxysterol, 7-ketocholesterol (7-oxocholesterol), into the more polar 7-beta-hydroxycholesterol and 7-alpha-hhydroxycholesterol metabolites. 7-oxocholesterol is one of the most important oxysterols, it participates in several events such as induction of apoptosis, accumulation in atherosclerotic lesions, lipid peroxidation, and induction of foam cell formation. Mediates the 7-oxo reduction of 7-oxolithocholate mainly to chenodeoxycholate, and to a lesser extent to ursodeoxycholate, both in its free form and when conjugated to glycine or taurine, providing a link between glucocorticoid activation and bile acid metabolism. Catalyzes the synthesis of 7-beta-25-dihydroxycholesterol from 7-oxo-25-hydroxycholesterol in vitro, which acts as a ligand for the G-protein-coupled receptor (GPCR) Epstein-Barr virus-induced gene 2 (EBI2) and may thereby regulate immune cell migration. This is 11-beta-hydroxysteroid dehydrogenase 1 (HSD11B1) from Mesocricetus auratus (Golden hamster).